The primary structure comprises 309 residues: Aspartate carbamoyltransferase catalytic subunit (309 aa).

Carbamoyl phosphate contacts are provided by Arg-55 and Thr-56. Lys-85 serves as a coordination point for L-aspartate. Arg-106, His-135, and Gln-138 together coordinate carbamoyl phosphate. L-aspartate-binding residues include Arg-168 and Arg-230. Carbamoyl phosphate contacts are provided by Leu-268 and Pro-269.

This sequence belongs to the aspartate/ornithine carbamoyltransferase superfamily. ATCase family. As to quaternary structure, heterododecamer (2C3:3R2) of six catalytic PyrB chains organized as two trimers (C3), and six regulatory PyrI chains organized as three dimers (R2).

It catalyses the reaction carbamoyl phosphate + L-aspartate = N-carbamoyl-L-aspartate + phosphate + H(+). It functions in the pathway pyrimidine metabolism; UMP biosynthesis via de novo pathway; (S)-dihydroorotate from bicarbonate: step 2/3. In terms of biological role, catalyzes the condensation of carbamoyl phosphate and aspartate to form carbamoyl aspartate and inorganic phosphate, the committed step in the de novo pyrimidine nucleotide biosynthesis pathway. This Aliivibrio fischeri (strain MJ11) (Vibrio fischeri) protein is Aspartate carbamoyltransferase catalytic subunit.